Consider the following 663-residue polypeptide: UvrABC system protein B (663 aa).

Positions 1-10 (MIDKRDDKPF) are enriched in basic and acidic residues. A disordered region spans residues 1–23 (MIDKRDDKPFKLKSKYKPSGDQP). The Helicase ATP-binding domain maps to 31–418 (DNIEGGEKAQ…TNTIIEQIIR (388 aa)). An ATP-binding site is contributed by 44-51 (GATGTGKT). The Beta-hairpin signature appears at 97 to 120 (YYDYYQPEAYVPSSDTYIEKDSSV). The region spanning 435-601 (QMDDLLGEIN…TIKKDIRGLI (167 aa)) is the Helicase C-terminal domain. The 36-residue stretch at 627 to 662 (KEAINALQKQMQEAAELLDFELAAQMRDLILELKLM) folds into the UVR domain.

This sequence belongs to the UvrB family. Forms a heterotetramer with UvrA during the search for lesions. Interacts with UvrC in an incision complex.

It localises to the cytoplasm. The UvrABC repair system catalyzes the recognition and processing of DNA lesions. A damage recognition complex composed of 2 UvrA and 2 UvrB subunits scans DNA for abnormalities. Upon binding of the UvrA(2)B(2) complex to a putative damaged site, the DNA wraps around one UvrB monomer. DNA wrap is dependent on ATP binding by UvrB and probably causes local melting of the DNA helix, facilitating insertion of UvrB beta-hairpin between the DNA strands. Then UvrB probes one DNA strand for the presence of a lesion. If a lesion is found the UvrA subunits dissociate and the UvrB-DNA preincision complex is formed. This complex is subsequently bound by UvrC and the second UvrB is released. If no lesion is found, the DNA wraps around the other UvrB subunit that will check the other stand for damage. This chain is UvrABC system protein B, found in Streptococcus pyogenes serotype M1.